A 127-amino-acid polypeptide reads, in one-letter code: Cystatin cpi-1 (127 aa).

The N-terminal stretch at 1 to 19 (MFFPIVWLSVLLIISKSFA) is a signal peptide. Positions 68 to 72 (QVVAG) match the Secondary area of contact motif. Cys86 and Cys98 are oxidised to a cystine.

Belongs to the cystatin family.

In terms of biological role, cysteine protease inhibitor which inhibits members of the peptidase C1 family. Does not inhibit asparaginyl endopeptidase. This is Cystatin cpi-1 from Brugia malayi (Filarial nematode worm).